A 194-amino-acid chain; its full sequence is uncharacterized protein (194 aa).

The HTH tetR-type domain maps to 6-66; that stretch reads EFDTALVLHR…SAVKSYLEGK (61 aa). The segment at residues 29-48 is a DNA-binding region (H-T-H motif); the sequence is SLQDLLSHLGIARQSLYDTY.

This is an uncharacterized protein from Bacillus subtilis (strain 168).